We begin with the raw amino-acid sequence, 306 residues long: Tyrosine--tRNA ligase (306 aa).

Residues tyrosine 32 and glutamate 36 each coordinate L-tyrosine. The 'HIGH' region motif lies at 37–45 (PSGKIHLGH). The tyrosine stretch occupies residues 151–158 (YPIMQVND). Glutamine 173 contributes to the L-tyrosine binding site. Residues 204-208 (KMSSS) carry the 'KMSKS' region motif. Serine 207 contacts ATP. Interaction with t-RNA stretches follow at residues 228 to 231 (KAYC) and 283 to 288 (HPMDLK).

Belongs to the class-I aminoacyl-tRNA synthetase family. TyrS type 3 subfamily. As to quaternary structure, homodimer.

Its subcellular location is the cytoplasm. It carries out the reaction tRNA(Tyr) + L-tyrosine + ATP = L-tyrosyl-tRNA(Tyr) + AMP + diphosphate + H(+). In terms of biological role, catalyzes the attachment of tyrosine to tRNA(Tyr) in a two-step reaction: tyrosine is first activated by ATP to form Tyr-AMP and then transferred to the acceptor end of tRNA(Tyr). The polypeptide is Tyrosine--tRNA ligase (tyrS) (Methanocaldococcus jannaschii (strain ATCC 43067 / DSM 2661 / JAL-1 / JCM 10045 / NBRC 100440) (Methanococcus jannaschii)).